Consider the following 962-residue polypeptide: Leucine--tRNA ligase (962 aa).

A 'HIGH' region motif is present at residues 40–51 (PYPSGAGLHVGH). The tract at residues 548-570 (SRKLSGQHDEPNSNVTPSAVEGS) is disordered. The short motif at 737–741 (KMSKS) is the 'KMSKS' region element. Residue Lys740 coordinates ATP.

It belongs to the class-I aminoacyl-tRNA synthetase family.

The protein resides in the cytoplasm. The catalysed reaction is tRNA(Leu) + L-leucine + ATP = L-leucyl-tRNA(Leu) + AMP + diphosphate. This chain is Leucine--tRNA ligase, found in Christiangramia forsetii (strain DSM 17595 / CGMCC 1.15422 / KT0803) (Gramella forsetii).